The primary structure comprises 341 residues: Methionine import ATP-binding protein MetN 1 (341 aa).

Positions isoleucine 2–valine 241 constitute an ABC transporter domain. Residue glycine 38–serine 45 participates in ATP binding.

This sequence belongs to the ABC transporter superfamily. Methionine importer (TC 3.A.1.24) family. In terms of assembly, the complex is composed of two ATP-binding proteins (MetN), two transmembrane proteins (MetI) and a solute-binding protein (MetQ).

The protein resides in the cell membrane. It catalyses the reaction L-methionine(out) + ATP + H2O = L-methionine(in) + ADP + phosphate + H(+). The catalysed reaction is D-methionine(out) + ATP + H2O = D-methionine(in) + ADP + phosphate + H(+). In terms of biological role, part of the ABC transporter complex MetNIQ involved in methionine import. Responsible for energy coupling to the transport system. The sequence is that of Methionine import ATP-binding protein MetN 1 from Staphylococcus aureus (strain USA300).